Here is a 501-residue protein sequence, read N- to C-terminus: MSSFILAIDQGTTSTRAILFNEEAKLVHYHHVEITQYFPQGGWVEHDPEEIWDSTLLCCRNVLEEASLRAADIAALGISNQRETTILWDRHTGQPLYRAIGWQDRRTVNFCEQLASQAGVLAKFVEKTGLILDPYFSCSKIKWILDNIKGAYEKAKRGELAFGTVDSYLLWKFTGGKCHATDATNASRTGLFNINQQRWDDELLTLFDIPKSLLPTVLDNCAQFGFTDLDLLGHKIPITAMIGDQQAAAVGQACIKPGMVKSTYGTGCFMLLNTGDQIIHSRNRLLATIAYRLNDTVTYGLEGSIFIAGAAVKWLRDPLHLIEKANDSESMASSVEDTGGVYLVPAFTGLGAPYWDPNARGALFGLTRNTQREHIVRAALEAVCYQSKDLVRAILNDGANLTTLRVDGGMAANNWLLQFLSDILGVNVDRSRCIESSALGTAFLAGLGAGLFDSLEEMTGLWQADRHFIPQMDPKKQEELYDGWQKAVEKTLTPAAPLLFP.

Residue Thr12 coordinates ADP. Residues Thr12, Thr13, and Ser14 each coordinate ATP. Thr12 serves as a coordination point for sn-glycerol 3-phosphate. ADP is bound at residue Arg16. Residues Arg82, Glu83, Tyr135, and Asp244 each coordinate sn-glycerol 3-phosphate. The glycerol site is built by Arg82, Glu83, Tyr135, Asp244, and Gln245. ADP is bound by residues Thr266, Gly309, Gly409, and Asn413. The ATP site is built by Thr266, Gly309, and Gly409.

Belongs to the FGGY kinase family.

The catalysed reaction is glycerol + ATP = sn-glycerol 3-phosphate + ADP + H(+). It participates in polyol metabolism; glycerol degradation via glycerol kinase pathway; sn-glycerol 3-phosphate from glycerol: step 1/1. Its activity is regulated as follows. Inhibited by fructose 1,6-bisphosphate (FBP). Functionally, key enzyme in the regulation of glycerol uptake and metabolism. Catalyzes the phosphorylation of glycerol to yield sn-glycerol 3-phosphate. This chain is Glycerol kinase, found in Coxiella burnetii (strain RSA 331 / Henzerling II).